The chain runs to 383 residues: Erythronate-4-phosphate dehydrogenase (383 aa).

Ser-45 and Thr-66 together coordinate substrate. Asp-146 and Thr-175 together coordinate NAD(+). The active site involves Arg-208. Residue Asp-232 coordinates NAD(+). Residue Glu-237 is part of the active site. His-254 serves as the catalytic Proton donor. An NAD(+)-binding site is contributed by Gly-257.

Belongs to the D-isomer specific 2-hydroxyacid dehydrogenase family. PdxB subfamily. As to quaternary structure, homodimer.

The protein localises to the cytoplasm. It carries out the reaction 4-phospho-D-erythronate + NAD(+) = (R)-3-hydroxy-2-oxo-4-phosphooxybutanoate + NADH + H(+). The protein operates within cofactor biosynthesis; pyridoxine 5'-phosphate biosynthesis; pyridoxine 5'-phosphate from D-erythrose 4-phosphate: step 2/5. Functionally, catalyzes the oxidation of erythronate-4-phosphate to 3-hydroxy-2-oxo-4-phosphonooxybutanoate. In Chromohalobacter salexigens (strain ATCC BAA-138 / DSM 3043 / CIP 106854 / NCIMB 13768 / 1H11), this protein is Erythronate-4-phosphate dehydrogenase.